The sequence spans 370 residues: Pulmonary surfactant-associated protein B (370 aa).

An N-terminal signal peptide occupies residues 1–24 (MAKSHLPPWLLLLLLPTLCGPGTA). Positions 25–184 (VWATSPLACA…PHTQDLSAQR (160 aa)) are excised as a propeptide. In terms of domain architecture, Saposin A-type spans 26-66 (WATSPLACAQGPEFWCQSLEQALQCKALGHCLQEVWGHVGA). Saposin B-type domains follow at residues 66–148 (ADDL…QPGS), 188–265 (PLPL…SSVD), and 284–359 (QDPE…VATL). 9 disulfide bridges follow: cysteine 70-cysteine 144, cysteine 73-cysteine 138, cysteine 101-cysteine 113, cysteine 192-cysteine 261, cysteine 195-cysteine 255, cysteine 219-cysteine 230, cysteine 288-cysteine 355, cysteine 291-cysteine 349, and cysteine 314-cysteine 324. The propeptide occupies 264–370 (VDSIGQVPPT…PLQCIQSPHF (107 aa)). The N-linked (GlcNAc...) asparagine glycan is linked to asparagine 300.

As to quaternary structure, homodimer; disulfide-linked.

The protein resides in the secreted. The protein localises to the extracellular space. It localises to the surface film. Functionally, pulmonary surfactant-associated proteins promote alveolar stability by lowering the surface tension at the air-liquid interface in the peripheral air spaces. SP-B increases the collapse pressure of palmitic acid to nearly 70 millinewtons per meter. In Oryctolagus cuniculus (Rabbit), this protein is Pulmonary surfactant-associated protein B (SFTPB).